The chain runs to 311 residues: Methionyl-tRNA formyltransferase (311 aa).

112–115 provides a ligand contact to (6S)-5,6,7,8-tetrahydrofolate; it reads SLLP.

The protein belongs to the Fmt family.

The enzyme catalyses L-methionyl-tRNA(fMet) + (6R)-10-formyltetrahydrofolate = N-formyl-L-methionyl-tRNA(fMet) + (6S)-5,6,7,8-tetrahydrofolate + H(+). Functionally, attaches a formyl group to the free amino group of methionyl-tRNA(fMet). The formyl group appears to play a dual role in the initiator identity of N-formylmethionyl-tRNA by promoting its recognition by IF2 and preventing the misappropriation of this tRNA by the elongation apparatus. This Sinorhizobium fredii (strain NBRC 101917 / NGR234) protein is Methionyl-tRNA formyltransferase.